Here is a 337-residue protein sequence, read N- to C-terminus: Exopolysaccharide phosphotransferase cps2G (337 aa).

This sequence belongs to the stealth family.

The sequence is that of Exopolysaccharide phosphotransferase cps2G (cps2G) from Lactiplantibacillus plantarum (strain ATCC BAA-793 / NCIMB 8826 / WCFS1) (Lactobacillus plantarum).